The following is a 59-amino-acid chain: Cortexin domain-containing 1 protein (59 aa).

A helical membrane pass occupies residues 17–37; it reads LTLACFVFLCLFLVVMIIRCA.

It localises to the membrane. This is Cortexin domain-containing 1 protein from Homo sapiens (Human).